An 88-amino-acid polypeptide reads, in one-letter code: MYILEISLKFTPMPVSVQRKEAEAAQAAYQQVVEALRSGQPSVLELHCEFQAEKKLAVLTSEIASVQLYEKSGGSATVKRPGFAVIGE.

This sequence belongs to the UPF0367 family.

This Synechococcus elongatus (strain ATCC 33912 / PCC 7942 / FACHB-805) (Anacystis nidulans R2) protein is UPF0367 protein Synpcc7942_1638.